We begin with the raw amino-acid sequence, 541 residues long: Berberine bridge enzyme-like 1 (541 aa).

A signal peptide spans 1 to 20; sequence MKLSCLVFLIVSSLVSSSLA. N-linked (GlcNAc...) asparagine glycosylation is found at N25, N38, N73, N136, N302, N339, and N357. C35 and C98 form a disulfide bridge. The FAD-binding PCMH-type domain maps to 76–255; it reads TSPKPLLVIA…LSFKIKLVPV (180 aa). Positions 113–180 form a cross-link, 6-(S-cysteinyl)-8alpha-(pros-histidyl)-FAD (His-Cys); that stretch reads HDYDGVSYIS…GTHGFPAGVC (68 aa).

This sequence belongs to the oxygen-dependent FAD-linked oxidoreductase family. The cofactor is FAD. The FAD cofactor is bound via a bicovalent 6-S-cysteinyl, 8alpha-N1-histidyl FAD linkage. Accumulates in cell walls of etiolated hypocotyls.

Its subcellular location is the secreted. The protein resides in the cell wall. The sequence is that of Berberine bridge enzyme-like 1 from Arabidopsis thaliana (Mouse-ear cress).